Reading from the N-terminus, the 43-residue chain is Myotoxin-1 (43 aa).

Cystine bridges form between Cys-4–Cys-36, Cys-11–Cys-30, and Cys-18–Cys-37.

This sequence belongs to the crotamine-myotoxin family. Monomer. In terms of tissue distribution, expressed by the venom gland.

It localises to the secreted. Functionally, cationic peptide that possesses multiple functions. It acts as a cell-penetrating peptide (CPP), and as a potent voltage-gated potassium channel (Kv) inhibitor. It exhibits antimicrobial activities, hind limb paralysis, and severe muscle necrosis by a non-enzymatic mechanism. The protein is Myotoxin-1 of Crotalus concolor (Midget faded rattlesnake).